The chain runs to 416 residues: MKYNLLPLILLSLLVAPLLAMGSAPAITVTTQPVYHPGQTVFISGVTSPNTLVGITIYNPQGKAVYSNTTTSGPNGDYSLKAFTFPLQESTTFPFGTYTVQVGTQTGFTNSTTFQFLPLTATVNVLVVNPQGVPIQGATVTADSVTATTNASGQAVLNLPTGTYTLKVVPPSPYSPASENITVTAPNTYSFKITVQIQELALQVVSATSPNVNLKDLTSGTSITMIGGTTLTLMSMVTFAGQPISTATVTAMYNGTMYNATYMNGYYVITISVPNTQYETDLVIQATYSGMQSNTVTLPLTVNVNEQAIIASLNSTIQSLESQISSLSSTVSTLSSSVTSLSNTVSSLSSTVSKLNGTVASLQSSVSTLSSEYSTLNSRVNALSGLSGTVDIALAVSIIAIIISIVVLILVFRKIS.

The N-terminal stretch at Met-1–Ala-20 is a signal peptide. A coiled-coil region spans residues Ile-310 to Thr-330. Residues Ile-392–Phe-412 form a helical membrane-spanning segment.

It belongs to the Sulfolobales SlaB family. In terms of assembly, the mushroom-shaped unit cells of the Sulfolobales' S-layers may consist of three SlaB subunits and six SlaA subunits.

The protein resides in the secreted. Its subcellular location is the cell wall. It localises to the S-layer. It is found in the cell membrane. Its function is as follows. S-layer small protein. May anchor the complex to the cell membrane. This Metallosphaera sedula (strain ATCC 51363 / DSM 5348 / JCM 9185 / NBRC 15509 / TH2) protein is S-layer protein B.